Reading from the N-terminus, the 318-residue chain is Basic leucine zipper (bZIP) transcription factor atfB (318 aa).

A disordered region spans residues 114-157; the sequence is FNSSPPEYAPPKHRSSLSEQSQTDGYGVSTRRRKASAIDQCEQQ. The tract at residues 160 to 199 is basic motif; the sequence is REKREKFLERNRLAASKCRQKKKEHTKLLETRFREVSNKK. Residues 160–223 enclose the bZIP domain; sequence REKREKFLER…LNLKNEMLRH (64 aa). Positions 202-216 are leucine-zipper; the sequence is LESEIEHLRSEVLNL. The tract at residues 275–301 is disordered; sequence DGPMQLPSEMGSPLDQRRDSEQSIMTE.

Belongs to the bZIP family. ATF subfamily.

The protein localises to the nucleus. Functionally, transcription factor that acts as a key player in the regulatory circuit that integrates secondary metabolism and cellular response to oxidative stress. Regulates the genes involved in development and stress response through direct binding to their promoters. The protein is Basic leucine zipper (bZIP) transcription factor atfB of Aspergillus flavus (strain ATCC 200026 / FGSC A1120 / IAM 13836 / NRRL 3357 / JCM 12722 / SRRC 167).